The primary structure comprises 236 residues: Phosphoribosylaminoimidazole-succinocarboxamide synthase (236 aa).

Belongs to the SAICAR synthetase family.

The enzyme catalyses 5-amino-1-(5-phospho-D-ribosyl)imidazole-4-carboxylate + L-aspartate + ATP = (2S)-2-[5-amino-1-(5-phospho-beta-D-ribosyl)imidazole-4-carboxamido]succinate + ADP + phosphate + 2 H(+). It participates in purine metabolism; IMP biosynthesis via de novo pathway; 5-amino-1-(5-phospho-D-ribosyl)imidazole-4-carboxamide from 5-amino-1-(5-phospho-D-ribosyl)imidazole-4-carboxylate: step 1/2. This Pseudomonas putida (strain GB-1) protein is Phosphoribosylaminoimidazole-succinocarboxamide synthase.